Reading from the N-terminus, the 112-residue chain is Ribosome-binding factor A (112 aa).

This sequence belongs to the RbfA family. Monomer. Binds 30S ribosomal subunits, but not 50S ribosomal subunits or 70S ribosomes.

The protein localises to the cytoplasm. Its function is as follows. One of several proteins that assist in the late maturation steps of the functional core of the 30S ribosomal subunit. Associates with free 30S ribosomal subunits (but not with 30S subunits that are part of 70S ribosomes or polysomes). Required for efficient processing of 16S rRNA. May interact with the 5'-terminal helix region of 16S rRNA. This chain is Ribosome-binding factor A, found in Mycoplasma genitalium (strain ATCC 33530 / DSM 19775 / NCTC 10195 / G37) (Mycoplasmoides genitalium).